The following is a 301-amino-acid chain: NADH-cytochrome b5 reductase 3 (301 aa).

Gly-2 is lipidated: N-myristoyl glycine. In terms of domain architecture, FAD-binding FR-type spans 40–152 (DIKYPLRLID…RGPNGLLVYQ (113 aa)). The residue at position 42 (Lys-42) is an N6-acetyllysine. Phosphotyrosine is present on Tyr-43. Lys-50 bears the N6-acetyllysine mark. Residues Arg-92, Pro-93, Tyr-94, Val-109, Lys-111, and Phe-114 each coordinate FAD. N6-acetyllysine is present on Lys-120. FAD is bound by residues Lys-126, Met-127, Ser-128, and Thr-185.

It belongs to the flavoprotein pyridine nucleotide cytochrome reductase family. As to quaternary structure, component of a complex composed of cytochrome b5, NADH-cytochrome b5 reductase (CYB5R3) and MTARC2. Interacts with MTLN; the interaction is required to maintain cellular lipid composition and leads to stimulation of mitochondrial respiratory complex I activity. FAD is required as a cofactor. In terms of processing, myristoylated. In terms of tissue distribution, ubiquitously expressed. Expressed only in erythroid tissues, reticulocytes and liver.

The protein localises to the endoplasmic reticulum membrane. It is found in the mitochondrion outer membrane. The protein resides in the cytoplasm. The catalysed reaction is 2 Fe(III)-[cytochrome b5] + NADH = 2 Fe(II)-[cytochrome b5] + NAD(+) + H(+). Functionally, catalyzes the reduction of two molecules of cytochrome b5 using NADH as the electron donor. This is NADH-cytochrome b5 reductase 3 from Rattus norvegicus (Rat).